Here is a 277-residue protein sequence, read N- to C-terminus: PTS system sorbose-specific EIIC component (277 aa).

5 helical membrane-spanning segments follow: residues 1–21 (MAISTIQIILIFIWSSVVGMG), 92–112 (IQKGIAIALPVAAAGQVLTVL), 133–153 (FTAIIWLHFTALIVQALRVSI), 177–197 (VITGGLAVAGGFIVVVGYAMI), and 219–239 (YLKLSLLAWGAVGLIFAIVYV). Residues 3–237 (ISTIQIILIF…GAVGLIFAIV (235 aa)) enclose the PTS EIIC type-4 domain.

Its subcellular location is the cell membrane. In terms of biological role, the phosphoenolpyruvate-dependent sugar phosphotransferase system (PTS), a major carbohydrate active transport system, catalyzes the phosphorylation of incoming sugar substrates concomitant with their translocation across the cell membrane. The enzyme II SorABCD PTS system is involved in L-sorbose transport. This Lacticaseibacillus casei (Lactobacillus casei) protein is PTS system sorbose-specific EIIC component.